A 547-amino-acid polypeptide reads, in one-letter code: Aspartate 1-decarboxylase (547 aa).

Position 338 is an N6-(pyridoxal phosphate)lysine (lysine 338).

This sequence belongs to the group II decarboxylase family. Pyridoxal 5'-phosphate is required as a cofactor.

The enzyme catalyses L-aspartate + H(+) = beta-alanine + CO2. The protein operates within cofactor biosynthesis; (R)-pantothenate biosynthesis; beta-alanine from L-aspartate: step 1/1. Catalyzes the pyridoxal-dependent decarboxylation of aspartate to produce beta-alanine. Has weak activity with glutamate. The polypeptide is Aspartate 1-decarboxylase (Aliivibrio fischeri (strain ATCC 700601 / ES114) (Vibrio fischeri)).